The sequence spans 221 residues: Probable endo-1,4-beta-xylanase B (221 aa).

An N-terminal signal peptide occupies residues 1 to 19 (MVSFSSLALALSTVVGVLA). Residues 33–221 (QLTHSQTGTK…SSGSATMTVS (189 aa)) form the GH11 domain. Glutamate 117 (nucleophile) is an active-site residue. Glutamate 208 serves as the catalytic Proton donor.

It belongs to the glycosyl hydrolase 11 (cellulase G) family.

The protein localises to the secreted. It catalyses the reaction Endohydrolysis of (1-&gt;4)-beta-D-xylosidic linkages in xylans.. The protein operates within glycan degradation; xylan degradation. Functionally, endo-1,4-beta-xylanase involved in the hydrolysis of xylan, a major structural heterogeneous polysaccharide found in plant biomass representing the second most abundant polysaccharide in the biosphere, after cellulose. The sequence is that of Probable endo-1,4-beta-xylanase B (xlnB) from Aspergillus clavatus (strain ATCC 1007 / CBS 513.65 / DSM 816 / NCTC 3887 / NRRL 1 / QM 1276 / 107).